Consider the following 262-residue polypeptide: Type III pantothenate kinase (262 aa).

12 to 19 is an ATP binding site; sequence DIGNTSIA. Substrate-binding positions include Y94 and 109-112; that span reads GSDV. Residue D111 is the Proton acceptor of the active site. A K(+)-binding site is contributed by D132. T135 lines the ATP pocket. T187 serves as a coordination point for substrate.

Belongs to the type III pantothenate kinase family. Homodimer. The cofactor is NH4(+). It depends on K(+) as a cofactor.

The protein resides in the cytoplasm. It catalyses the reaction (R)-pantothenate + ATP = (R)-4'-phosphopantothenate + ADP + H(+). Its pathway is cofactor biosynthesis; coenzyme A biosynthesis; CoA from (R)-pantothenate: step 1/5. In terms of biological role, catalyzes the phosphorylation of pantothenate (Pan), the first step in CoA biosynthesis. The sequence is that of Type III pantothenate kinase from Borrelia garinii subsp. bavariensis (strain ATCC BAA-2496 / DSM 23469 / PBi) (Borreliella bavariensis).